The sequence spans 222 residues: PKHD-type hydroxylase Syncc9605_1577 (222 aa).

One can recognise a Fe2OG dioxygenase domain in the interval 80–175 (KVHSLLVSRS…RYVCVGWIES (96 aa)). Positions 98, 100, and 156 each coordinate Fe cation. R166 is a 2-oxoglutarate binding site.

The cofactor is Fe(2+). It depends on L-ascorbate as a cofactor.

This is PKHD-type hydroxylase Syncc9605_1577 from Synechococcus sp. (strain CC9605).